A 245-amino-acid chain; its full sequence is 1-(5-phosphoribosyl)-5-[(5-phosphoribosylamino)methylideneamino] imidazole-4-carboxamide isomerase (245 aa).

The Proton acceptor role is filled by aspartate 7. Aspartate 129 (proton donor) is an active-site residue.

This sequence belongs to the HisA/HisF family.

It is found in the cytoplasm. It carries out the reaction 1-(5-phospho-beta-D-ribosyl)-5-[(5-phospho-beta-D-ribosylamino)methylideneamino]imidazole-4-carboxamide = 5-[(5-phospho-1-deoxy-D-ribulos-1-ylimino)methylamino]-1-(5-phospho-beta-D-ribosyl)imidazole-4-carboxamide. It functions in the pathway amino-acid biosynthesis; L-histidine biosynthesis; L-histidine from 5-phospho-alpha-D-ribose 1-diphosphate: step 4/9. In Escherichia coli O17:K52:H18 (strain UMN026 / ExPEC), this protein is 1-(5-phosphoribosyl)-5-[(5-phosphoribosylamino)methylideneamino] imidazole-4-carboxamide isomerase.